Reading from the N-terminus, the 256-residue chain is Ribosomal RNA small subunit methyltransferase J (256 aa).

S-adenosyl-L-methionine is bound by residues 104–105 (RD), 120–121 (ER), 156–157 (SS), and Asp-174.

Belongs to the methyltransferase superfamily. RsmJ family.

It is found in the cytoplasm. The catalysed reaction is guanosine(1516) in 16S rRNA + S-adenosyl-L-methionine = N(2)-methylguanosine(1516) in 16S rRNA + S-adenosyl-L-homocysteine + H(+). Its function is as follows. Specifically methylates the guanosine in position 1516 of 16S rRNA. The sequence is that of Ribosomal RNA small subunit methyltransferase J from Yersinia pseudotuberculosis serotype O:1b (strain IP 31758).